The chain runs to 342 residues: tRNA N6-adenosine threonylcarbamoyltransferase (342 aa).

Residues histidine 115 and histidine 119 each coordinate Fe cation. Substrate-binding positions include 137-141 (IVSGG), aspartate 170, glycine 183, aspartate 187, and asparagine 276. Aspartate 304 is a binding site for Fe cation.

It belongs to the KAE1 / TsaD family. Requires Fe(2+) as cofactor.

It localises to the cytoplasm. It catalyses the reaction L-threonylcarbamoyladenylate + adenosine(37) in tRNA = N(6)-L-threonylcarbamoyladenosine(37) in tRNA + AMP + H(+). Its function is as follows. Required for the formation of a threonylcarbamoyl group on adenosine at position 37 (t(6)A37) in tRNAs that read codons beginning with adenine. Is involved in the transfer of the threonylcarbamoyl moiety of threonylcarbamoyl-AMP (TC-AMP) to the N6 group of A37, together with TsaE and TsaB. TsaD likely plays a direct catalytic role in this reaction. This Staphylococcus haemolyticus (strain JCSC1435) protein is tRNA N6-adenosine threonylcarbamoyltransferase.